Consider the following 80-residue polypeptide: Three-finger toxin MALT0059C (80 aa).

The first 21 residues, 1 to 21, serve as a signal peptide directing secretion; sequence MRTLLLTLVVVTIVCLDLGNS. 4 disulfide bridges follow: C24–C41, C35–C60, C64–C72, and C73–C78.

The protein belongs to the three-finger toxin family. Short-chain subfamily. As to expression, expressed by the venom gland.

It is found in the secreted. Functionally, neurotoxin. Blocks muscular nicotinic acetylcholine receptors (nAChR). This is Three-finger toxin MALT0059C from Micrurus altirostris (Uruguayan coral snake).